The sequence spans 461 residues: Elongation factor 1-alpha, oocyte form (461 aa).

Gly2 carries the post-translational modification N,N,N-trimethylglycine. The tr-type G domain maps to 5–242; it reads KIHINIVVIG…DCIIPPQRPT (238 aa). Residues 14–21 are G1; the sequence is GHVDSGKS. 14–21 is a GTP binding site; the sequence is GHVDSGKS. Residues 70 to 74 form a G2 region; the sequence is GITID. Residues 91-94 are G3; that stretch reads DAPG. GTP-binding positions include 91–95 and 153–156; these read DAPGH and NKMD. The segment at 153-156 is G4; the sequence is NKMD. The G5 stretch occupies residues 194–196; that stretch reads SGW. 5-glutamyl glycerylphosphorylethanolamine is present on residues Glu301 and Glu374.

This sequence belongs to the TRAFAC class translation factor GTPase superfamily. Classic translation factor GTPase family. EF-Tu/EF-1A subfamily. Oocyte.

The protein resides in the cytoplasm. Functionally, this protein promotes the GTP-dependent binding of aminoacyl-tRNA to the A-site of ribosomes during protein biosynthesis. This is Elongation factor 1-alpha, oocyte form from Xenopus laevis (African clawed frog).